The primary structure comprises 229 residues: 2,3-bisphosphoglycerate-dependent phosphoglycerate mutase 2 (229 aa).

Substrate-binding positions include 8-15 (RHGQSEWN), 21-22 (TG), Arg60, 87-90 (ERHY), Lys98, 114-115 (RR), and 183-184 (GN). His9 functions as the Tele-phosphohistidine intermediate in the catalytic mechanism. Glu87 (proton donor/acceptor) is an active-site residue.

The protein belongs to the phosphoglycerate mutase family. BPG-dependent PGAM subfamily.

It catalyses the reaction (2R)-2-phosphoglycerate = (2R)-3-phosphoglycerate. The protein operates within carbohydrate degradation; glycolysis; pyruvate from D-glyceraldehyde 3-phosphate: step 3/5. Catalyzes the interconversion of 2-phosphoglycerate and 3-phosphoglycerate. The protein is 2,3-bisphosphoglycerate-dependent phosphoglycerate mutase 2 of Latilactobacillus sakei subsp. sakei (strain 23K) (Lactobacillus sakei subsp. sakei).